The primary structure comprises 156 residues: ATP synthase subunit b (156 aa).

Residues Leu7–Leu29 traverse the membrane as a helical segment.

Belongs to the ATPase B chain family. F-type ATPases have 2 components, F(1) - the catalytic core - and F(0) - the membrane proton channel. F(1) has five subunits: alpha(3), beta(3), gamma(1), delta(1), epsilon(1). F(0) has three main subunits: a(1), b(2) and c(10-14). The alpha and beta chains form an alternating ring which encloses part of the gamma chain. F(1) is attached to F(0) by a central stalk formed by the gamma and epsilon chains, while a peripheral stalk is formed by the delta and b chains.

It is found in the cell inner membrane. F(1)F(0) ATP synthase produces ATP from ADP in the presence of a proton or sodium gradient. F-type ATPases consist of two structural domains, F(1) containing the extramembraneous catalytic core and F(0) containing the membrane proton channel, linked together by a central stalk and a peripheral stalk. During catalysis, ATP synthesis in the catalytic domain of F(1) is coupled via a rotary mechanism of the central stalk subunits to proton translocation. Functionally, component of the F(0) channel, it forms part of the peripheral stalk, linking F(1) to F(0). In Ectopseudomonas mendocina (strain ymp) (Pseudomonas mendocina), this protein is ATP synthase subunit b.